Consider the following 185-residue polypeptide: Capsid protein (185 aa).

A disordered region spans residues 136-185 (NAPILSTLPETTVVRRRDRGRSPRRRTPSPRRRRSQSPRRRRSQSRESQC). A compositionally biased stretch (basic residues) spans 149–178 (VRRRDRGRSPRRRTPSPRRRRSQSPRRRRS). Ser-157, Ser-164, and Ser-172 each carry phosphoserine; by host. Residues 157–163 (SPRRRTP) form a 1; half-length repeat. The tract at residues 157–179 (SPRRRTPSPRRRRSQSPRRRRSQ) is 3 X 8 AA repeats of S-P-R-R-R-[PR]-S-Q. Residues 160–177 (RRTPSPRRRRSQSPRRRR) carry the Bipartite nuclear localization signal motif. A run of 2 repeats spans residues 164–171 (SPRRRRSQ) and 172–179 (SPRRRRSQ). Residues 179-185 (QSRESQC) are RNA binding.

Belongs to the orthohepadnavirus core antigen family. Homodimerizes, then multimerizes. Interacts with cytosol exposed regions of viral L glycoprotein present in the reticulum-to-Golgi compartment. Interacts with human FLNB. Phosphorylated form interacts with host importin alpha; this interaction depends on the exposure of the NLS, which itself depends upon genome maturation and/or phosphorylation of the capsid protein. Interacts with host NUP153. In terms of processing, phosphorylated by host SRPK1, SRPK2, and maybe protein kinase C or GAPDH. Phosphorylation is critical for pregenomic RNA packaging. Protein kinase C phosphorylation is stimulated by HBx protein and may play a role in transport of the viral genome to the nucleus at the late step during the viral replication cycle.

Its subcellular location is the virion. It is found in the host cytoplasm. Its function is as follows. Self assembles to form an icosahedral capsid. Most capsids appear to be large particles with an icosahedral symmetry of T=4 and consist of 240 copies of capsid protein, though a fraction forms smaller T=3 particles consisting of 180 capsid proteins. Entering capsids are transported along microtubules to the nucleus. Phosphorylation of the capsid is thought to induce exposure of nuclear localization signal in the C-terminal portion of the capsid protein that allows binding to the nuclear pore complex via the importin (karyopherin-) alpha and beta. Capsids are imported in intact form through the nuclear pore into the nuclear basket, where it probably binds NUP153. Only capsids that contain the mature viral genome can release the viral DNA and capsid protein into the nucleoplasm. Immature capsids get stuck in the basket. Capsids encapsulate the pre-genomic RNA and the P protein. Pre-genomic RNA is reverse-transcribed into DNA while the capsid is still in the cytoplasm. The capsid can then either be directed to the nucleus, providing more genomes for transcription, or bud through the endoplasmic reticulum to provide new virions. The protein is Capsid protein of Homo sapiens (Human).